The sequence spans 505 residues: Cyclin-dependent kinase C-1 (505 aa).

One can recognise a Protein kinase domain in the interval 26-325 (FEKLEQIGEG…AKDALDAEYF (300 aa)). Residues 32–40 (IGEGTYGQV) and lysine 55 each bind ATP. The residue at position 37 (tyrosine 37) is a Phosphotyrosine. The Proton acceptor role is filled by aspartate 164. Position 198 is a phosphothreonine (threonine 198). Positions 336-505 (SLPTYESSHE…QRNQQYGWQQ (170 aa)) are disordered. Over residues 429-456 (PPSGNQSGGYNQSRGGYSSGSYPPQGRG) the composition is skewed to low complexity. Residues 482-491 (GQYGGSGSSG) are compositionally biased toward gly residues. Positions 492–505 (RGQNQRNQQYGWQQ) are enriched in low complexity.

This sequence belongs to the protein kinase superfamily. CMGC Ser/Thr protein kinase family. CDC2/CDKX subfamily. As to quaternary structure, interacts with CYCT1-3. As to expression, highly expressed in flowers. Expressed in seedlings, roots, rosettes and stems.

The catalysed reaction is L-seryl-[protein] + ATP = O-phospho-L-seryl-[protein] + ADP + H(+). The enzyme catalyses L-threonyl-[protein] + ATP = O-phospho-L-threonyl-[protein] + ADP + H(+). It catalyses the reaction [DNA-directed RNA polymerase] + ATP = phospho-[DNA-directed RNA polymerase] + ADP + H(+). The protein is Cyclin-dependent kinase C-1 (CDKC-1) of Arabidopsis thaliana (Mouse-ear cress).